The chain runs to 344 residues: Cysteine proteinase 5 (344 aa).

An N-terminal signal peptide occupies residues 1 to 17; sequence MKVLSFLCVLLVSVATA. Positions 18 to 111 are cleaved as a propeptide — activation peptide; the sequence is KQQFSELQYR…TQEEKVFTTS (94 aa). Cystine bridges form between C133/C174, C167/C207, and C265/C333. C136 is an active-site residue. Residue H272 is part of the active site. An N-linked (GlcNAc...) asparagine glycan is attached at N297. Residue N311 is part of the active site.

It belongs to the peptidase C1 family. Post-translationally, glycosylated; contains GlcNAc-alpha-1-P-Ser residues.

The protein resides in the lysosome. The polypeptide is Cysteine proteinase 5 (cprE) (Dictyostelium discoideum (Social amoeba)).